Reading from the N-terminus, the 103-residue chain is Large ribosomal subunit protein eL21 (103 aa).

Belongs to the eukaryotic ribosomal protein eL21 family.

In Sulfurisphaera tokodaii (strain DSM 16993 / JCM 10545 / NBRC 100140 / 7) (Sulfolobus tokodaii), this protein is Large ribosomal subunit protein eL21.